An 894-amino-acid chain; its full sequence is B-cell lymphoma/leukemia 11B (894 aa).

Ser97 and Ser110 each carry phosphoserine. Residue Thr120 is modified to Phosphothreonine. Phosphoserine is present on Ser129. Lys137 participates in a covalent cross-link: Glycyl lysine isopeptide (Lys-Gly) (interchain with G-Cter in SUMO2). The C2H2-type 1 zinc finger occupies 221 to 251; sequence YICTTCKQPFNSAWFLLQHAQNTHGFRIYLE. Residue Ser256 is modified to Phosphoserine. Phosphothreonine is present on Thr260. Ser277 carries the post-translational modification Phosphoserine. Arg293 carries the post-translational modification Omega-N-methylarginine. Residue Arg322 is modified to Asymmetric dimethylarginine. A Phosphoserine modification is found at Ser358. 2 disordered regions span residues 370 to 428 and 471 to 583; these read LAGN…KSKS and KRHM…GGGA. Position 376 is a phosphothreonine (Thr376). Ser381, Ser398, and Ser401 each carry phosphoserine. Positions 396–423 are enriched in pro residues; the sequence is QPSPKSPFLSTPPLPPMPPGGTPPPQPP. Thr406 and Thr417 each carry phosphothreonine. 2 C2H2-type zinc fingers span residues 427-454 and 455-482; these read KSCE…GEKP and YKCQ…HKAG. Residues 471-480 show a composition bias toward basic residues; that stretch reads KRHMKTHMHK. A phosphoserine mark is found at Ser483, Ser488, Ser496, and Ser497. The segment covering 511 to 529 has biased composition (basic and acidic residues); sequence KAADGDFRHHESDPSLGHE. Positions 530 to 546 are enriched in acidic residues; the sequence is PEEEDEEEEEEEEELLL. Over residues 568 to 583 the composition is skewed to gly residues; that stretch reads NGGGGVPGVPGAGGGA. Residues Lys591 and Lys617 each participate in a glycyl lysine isopeptide (Lys-Gly) (interchain with G-Cter in SUMO2) cross-link. Positions 653–680 are disordered; the sequence is GRGGGFAPGTEPFPGLFPRKPAPLPSPG. Ser678 bears the Phosphoserine mark. Glycyl lysine isopeptide (Lys-Gly) (interchain with G-Cter in SUMO2) cross-links involve residues Lys686 and Lys723. The span at 737 to 752 shows a compositional bias: polar residues; that stretch reads FATSSEHSSENGSLRF. Residues 737–794 are disordered; that stretch reads FATSSEHSSENGSLRFSTPPGDLLDGGLSGRSGTASGGSTPHLGGPGPGRPSSKEGRR. Low complexity predominate over residues 753–775; that stretch reads STPPGDLLDGGLSGRSGTASGGS. Thr754 carries the post-translational modification Phosphothreonine. Residues Ser765 and Ser772 each carry the phosphoserine modification. C2H2-type zinc fingers lie at residues 796–823, 824–853, and 854–884; these read DTCE…GERP, YKCE…GKEV, and YRCD…LLTN. The residue at position 851 (Lys851) is an N6-acetyllysine. Lys887 is covalently cross-linked (Glycyl lysine isopeptide (Lys-Gly) (interchain with G-Cter in SUMO2)).

Interacts with TFCOUP1, SIRT1, ARP1 and EAR2. Interacts with EP300; the interaction is detected in activated T-lymphocytes, but not under resting conditions. In terms of processing, sumoylated with SUMO1. In terms of tissue distribution, highly expressed in brain and in malignant T-cell lines derived from patients with adult T-cell leukemia/lymphoma.

The protein resides in the nucleus. Its function is as follows. Key regulator of both differentiation and survival of T-lymphocytes during thymocyte development in mammals. Essential in controlling the responsiveness of hematopoietic stem cells to chemotactic signals by modulating the expression of the receptors CCR7 and CCR9, which direct the movement of progenitor cells from the bone marrow to the thymus. Is a regulator of IL2 promoter and enhances IL2 expression in activated CD4(+) T-lymphocytes. Tumor-suppressor that represses transcription through direct, TFCOUP2-independent binding to a GC-rich response element. May also function in the P53-signaling pathway. This Homo sapiens (Human) protein is B-cell lymphoma/leukemia 11B (BCL11B).